An 839-amino-acid polypeptide reads, in one-letter code: Taste receptor type 1 member 2 (839 aa).

Residues 1-19 form the signal peptide; the sequence is MGPRAKTICSLFFLLWVLA. At 20-566 the chain is on the extracellular side; that stretch reads EPAENSDFYL…VFLEWHEAPT (547 aa). N-linked (GlcNAc...) asparagine glycosylation is found at N84, N248, N292, N312, N368, N407, N428, N487, and N527. The chain crosses the membrane as a helical span at residues 567-587; sequence IAVALLAALGFLSTLAILVIF. Residues 588–602 are Cytoplasmic-facing; it reads WRHFQTPIVRSAGGP. Residues 603–623 form a helical membrane-spanning segment; it reads MCFLMLTLLLVAYMVVPVYVG. Over 624–635 the chain is Extracellular; the sequence is PPKVSTCLCRQA. The chain crosses the membrane as a helical span at residues 636 to 656; it reads LFPLCFTICISCIAVRSFQIV. Residues 657–681 lie on the Cytoplasmic side of the membrane; it reads CAFKMASRFPRAYSYWVRYQGPYVS. The chain crosses the membrane as a helical span at residues 682-702; sequence MAFITVLKMVIVVIGMLATGL. The Extracellular portion of the chain corresponds to 703 to 727; the sequence is SPTTRTDPDDPKITIVSCNPNYRNS. Residues 728 to 748 traverse the membrane as a helical segment; sequence LLFNTSLDLLLSVVGFSFAYM. The Cytoplasmic segment spans residues 749-760; the sequence is GKELPTNYNEAK. Residues 761–781 form a helical membrane-spanning segment; that stretch reads FITLSMTFYFTSSVSLCTFMS. The Extracellular segment spans residues 782–784; that stretch reads AYS. A helical membrane pass occupies residues 785 to 805; it reads GVLVTIVDLLVTVLNLLAISL. The Cytoplasmic segment spans residues 806–839; that stretch reads GYFGPKCYMILFYPERNTSAYFNSMIQGYTMRRD.

Belongs to the G-protein coupled receptor 3 family. TAS1R subfamily. In terms of assembly, forms heterodimers with TAS1R3.

It localises to the cell membrane. In terms of biological role, putative taste receptor. TAS1R2/TAS1R3 recognizes diverse natural and synthetic sweeteners. This Pan troglodytes (Chimpanzee) protein is Taste receptor type 1 member 2 (TAS1R2).